The sequence spans 389 residues: Globin-like protein 6 (389 aa).

A compositionally biased stretch (polar residues) spans 1–15; the sequence is MGNQSTKSTHGTTRV. Disordered stretches follow at residues 1–38, 96–123, and 143–185; these read MGNQ…RSAS, RTSK…SVDS, and TVSS…SSNP. Over residues 16–25 the composition is skewed to basic residues; it reads SHSKSAHHNS. Residues 196 to 347 enclose the Globin domain; that stretch reads HLTQPQILFV…VTEQLKEGFQ (152 aa). Heme b contacts are provided by His254 and His286. The segment at 367-389 is disordered; that stretch reads SSFEISTKTKQSDMKRFHTLDNM. Positions 376 to 389 are enriched in basic and acidic residues; sequence KQSDMKRFHTLDNM.

The protein belongs to the globin family. As to expression, expressed in the head and tail neurons and nerve cord.

Functionally, may play a role as physiological sensor for oxygen via redox signaling and/or electron transport. The chain is Globin-like protein 6 from Caenorhabditis elegans.